A 188-amino-acid chain; its full sequence is Probable nicotinate-nucleotide adenylyltransferase (188 aa).

This sequence belongs to the NadD family.

It catalyses the reaction nicotinate beta-D-ribonucleotide + ATP + H(+) = deamido-NAD(+) + diphosphate. The protein operates within cofactor biosynthesis; NAD(+) biosynthesis; deamido-NAD(+) from nicotinate D-ribonucleotide: step 1/1. Its function is as follows. Catalyzes the reversible adenylation of nicotinate mononucleotide (NaMN) to nicotinic acid adenine dinucleotide (NaAD). This is Probable nicotinate-nucleotide adenylyltransferase from Listeria monocytogenes serovar 1/2a (strain ATCC BAA-679 / EGD-e).